The chain runs to 294 residues: 4-hydroxy-tetrahydrodipicolinate synthase (294 aa).

Thr-45 contributes to the pyruvate binding site. Tyr-133 serves as the catalytic Proton donor/acceptor. Lys-162 (schiff-base intermediate with substrate) is an active-site residue. Residue Ile-204 coordinates pyruvate.

This sequence belongs to the DapA family. Homotetramer; dimer of dimers.

The protein resides in the cytoplasm. It catalyses the reaction L-aspartate 4-semialdehyde + pyruvate = (2S,4S)-4-hydroxy-2,3,4,5-tetrahydrodipicolinate + H2O + H(+). The protein operates within amino-acid biosynthesis; L-lysine biosynthesis via DAP pathway; (S)-tetrahydrodipicolinate from L-aspartate: step 3/4. In terms of biological role, catalyzes the condensation of (S)-aspartate-beta-semialdehyde [(S)-ASA] and pyruvate to 4-hydroxy-tetrahydrodipicolinate (HTPA). This Rhizobium meliloti (strain 1021) (Ensifer meliloti) protein is 4-hydroxy-tetrahydrodipicolinate synthase.